The chain runs to 437 residues: F-box only protein 9 (437 aa).

The tract at residues 1-26 (MSAEAEEDCHSDADRVGDEGNESPAE) is disordered. Position 2 is an N-acetylalanine (Ser2). Residues 8–26 (DCHSDADRVGDEGNESPAE) are compositionally biased toward basic and acidic residues. A Phosphoserine modification is found at His10. One copy of the TPR repeat lies at 84–117 (ARELFLQAVEEEQNGALYEAIKFYRRAMQLVPDI). Position 126 is a phosphoserine (Ser126). In terms of domain architecture, F-box spans 175–226 (QTHISVLPMEVLMYIFRWVVSSDLDLRSLEQLSLVCRGFYICARDPEIWRLA).

Part of the SCF (SKP1-CUL1-F-box) E3 ubiquitin-protein ligase complex SCF(FBXO9) composed of CUL1, SKP1, RBX1 and FBXO9. Interacts with TTI1 and TELO2; when TTI1 and TELO2 are phosphorylated by CK2.

It localises to the cytoplasm. The protein operates within protein modification; protein ubiquitination. Its function is as follows. Substrate recognition component of a SCF (SKP1-CUL1-F-box protein) E3 ubiquitin-protein ligase complex which mediates the ubiquitination and subsequent proteasomal degradation of target proteins and plays a role in several biological processes such as cell cycle, cell proliferation, or maintenance of chromosome stability. Ubiquitinates mTORC1-bound TTI1 and TELO2 when they are phosphorylated by CK2 following growth factor deprivation, leading to their degradation. In contrast, does not mediate ubiquitination of TTI1 and TELO2 when they are part of the mTORC2 complex. As a consequence, mTORC1 is inactivated to restrain cell growth and protein translation, while mTORC2 is the activated due to the relief of feedback inhibition by mTORC1. Plays a role in maintaining epithelial cell survival by regulating the turn-over of chromatin modulator PRMT4 through ubiquitination and degradation by the proteasomal pathway. Also regulates PPARgamma stability by facilitating PPARgamma/PPARG ubiquitination and thereby plays a role in adipocyte differentiation. The sequence is that of F-box only protein 9 (Fbxo9) from Mus musculus (Mouse).